The chain runs to 605 residues: MVLPKIFSYDIDERINLIQTITGKKPADIVISNVNLVLTPTGEILDNASIIISGKRIAGAGKYSELHRFIGKNTLVIDGENNYAMPGFIDPHIHIESSLLTPHGFAKLALRHGTTTVVADPHEIGNVLGSRGVEIFMDAARNLPLKILIDIPSCVPATDPKFGLETTANIIGADEVEKLAALEGTIGLGEVMDFVSVLNSNKSVLEKIRVAHRYRLIVNGHAPLLRGAELDAYIDAGIWSDHESTIYEEALEKARKGMYVFIREGSAWKDLKALLPLIKNHTIDHRFLSFASDDINVVDLMEKGHMDRIINIAIEYGVDPVKAIQLATIGPAMRIHLEDHVGVVGPARLADIVLSKNIEYIKPHTVIANGEIIYYKGELKKTFNNYKYPEETLNTVKLAKIPEPQEFIPKINTREGIVEANIIEVTPGSALTKHVIEELAVKNYNVLADPNRDIIYAAVIDRHKATGSMGKGFIKGLGFRAGAIAQTIAHDTHNLIVAGNNPEDMSRAVKRIVEIQGGIVVVDEGKIIGELPLRLAGLMSIEEPETVYEKYKKITNELNNGYGLEFESFFMTLALVALPVIPEIRLTDKGLVDVRKAKLIPLINK.

It belongs to the metallo-dependent hydrolases superfamily. Adenine deaminase family. It depends on Mn(2+) as a cofactor.

It carries out the reaction adenine + H2O + H(+) = hypoxanthine + NH4(+). This chain is Adenine deaminase, found in Staphylothermus marinus (strain ATCC 43588 / DSM 3639 / JCM 9404 / F1).